A 1135-amino-acid polypeptide reads, in one-letter code: Envelopment polyprotein (1135 aa).

Residues 1–18 form the signal peptide; it reads MIMWGLLLTMILIDFGAS. Topologically, residues 19–495 are lumenal; sequence LRNVYDMKIE…ALLTTFCFGW (477 aa). 11 disulfide bridges follow: Cys29–Cys151, Cys63–Cys157, Cys109–Cys128, Cys133–Cys138, Cys175–Cys185, Cys210–Cys247, Cys234–Cys351, Cys376–Cys435, Cys380–Cys389, Cys405–Cys424, and Cys452–Cys475. A glycan (N-linked (GlcNAc...) asparagine; by host) is linked at Asn134. Asn235 and Asn347 each carry an N-linked (GlcNAc...) asparagine; by host glycan. An N-linked (GlcNAc...) asparagine; by host glycan is attached at Asn399. Residues 496-516 traverse the membrane as a helical segment; it reads ILILSITLAVLVVLKFFAAIL. A binding to the ribonucleoprotein region spans residues 516 to 533; that stretch reads LHNSSQENRFKIILRKIK. The Cytoplasmic portion of the chain corresponds to 517 to 627; the sequence is HNSSQENRFK…LNLFRYKSRC (111 aa). 2 consecutive CCHC-type zinc fingers follow at residues 545–565 and 570–591; these read CEVC…NLSC and CPYC…YKVC. Binding to the ribonucleoprotein regions lie at residues 588–605, 592–603, and 611–625; these read YKVC…KKTI, QATHRFRDDLKK, and SPGC…RYKS. In terms of domain architecture, ITAM spans 611–634; sequence SPGCYRTLNLFRYKSRCYIFTVWV. 2 positions are modified to phosphotyrosine: Tyr615 and Tyr628. The YxxL motif lies at 615-618; the sequence is YRTL. A helical membrane pass occupies residues 628–648; that stretch reads YIFTVWVTLLIIESIMWAASA. At 649–1105 the chain is on the lumenal side; that stretch reads SETVLEPSWN…EWITGIFNGN (457 aa). 8 cysteine pairs are disulfide-bonded: Cys735/Cys770, Cys739/Cys777, Cys751/Cys885, Cys765/Cys896, Cys780/Cys904, Cys806/Cys815, Cys823/Cys832, and Cys863/Cys867. The segment at 757-777 is fusion loop; that stretch reads FEYENNWGCNPADCPGIGTGC. Asn928 carries N-linked (GlcNAc...) asparagine; by host glycosylation. Disulfide bonds link Cys970–Cys1000, Cys993–Cys1045, Cys1010–Cys1015, Cys1046–Cys1051, and Cys1085–Cys1089. The chain crosses the membrane as a helical span at residues 1106 to 1126; the sequence is WIVIVVLVFFFILSLILLSLL. The interval 1122-1135 is binding to the ribonucleoprotein; that stretch reads LLSLLCPIRKHKRS. Residues 1127–1135 lie on the Cytoplasmic side of the membrane; that stretch reads CPIRKHKRS.

It belongs to the hantavirus envelope glycoprotein family. As to quaternary structure, homodimer. Homotetramer; forms heterotetrameric Gn-Gc spikes in the pre-fusion conformation. Interacts (via C-terminus) with the nucleoprotein. Interacts with host TUFM; this interaction contributes to the virus-induced degradation of mitochondria by autophagy, which leads to degradation of host MAVS and inhibition of type I interferon (IFN) responses. Interacts with host MAP1LC3B; this interaction contributes to the virus-induced degradation of mitochondria by autophagy, which leads to degradation of host MAVS and inhibition of type I interferon (IFN) responses. Homodimer. Homotetramer; forms heterotetrameric Gn-Gc spikes in the pre-fusion conformation. Homotrimer; forms homotrimer in the post-fusion conformation at acidic pH. Interacts (via C-terminus) with the nucleoprotein. In terms of processing, envelope polyprotein precursor is quickly cleaved in vivo just after synthesis, presumably by host signal peptidase.

It is found in the virion membrane. The protein resides in the host cell surface. Its subcellular location is the host Golgi apparatus membrane. The protein localises to the host endoplasmic reticulum membrane. It localises to the host mitochondrion. Its function is as follows. Forms homotetramers with glycoprotein C at the surface of the virion. Attaches the virion to host cell receptors including integrin ITGAV/ITGB3. This attachment induces virion internalization predominantly through clathrin-dependent endocytosis. Mediates the assembly and budding of infectious virus particles through its interaction with the nucleocapsid protein and the viral genome. May dysregulate normal immune and endothelial cell responses through an ITAM motif. Translocates to mitochondria, binds to host TUFM and recruits MAP1LC3B. These interactions induce mitochondrial autophagy and therefore destruction of host MAVS leading to inhibition of type I interferon (IFN) responses. Concomitant breakdown of glycoprotein N is apparently prevented by the nucleoprotein that may inhibit Gn-stimulated autophagosome-lysosome fusion. Interacts with the viral genomic RNA. Functionally, forms homotetramers with glycoprotein N at the surface of the virion. Attaches the virion to host cell receptors including integrin ITGAV/ITGB3. This attachment induces virion internalization predominantly through clathrin-dependent endocytosis. Class II fusion protein that promotes fusion of viral membrane with host endosomal membrane after endocytosis of the virion. This chain is Envelopment polyprotein (GP), found in Dobrava-Belgrade orthohantavirus (DOBV).